The chain runs to 63 residues: Bucandin (63 aa).

Disulfide bonds link cysteine 3-cysteine 24, cysteine 6-cysteine 11, cysteine 17-cysteine 39, cysteine 43-cysteine 55, and cysteine 56-cysteine 61.

In terms of tissue distribution, expressed by the venom gland.

It localises to the secreted. Its function is as follows. This toxin is described as enhancing presynaptic acetylcholine release, but neither experimental results, nor references to other sources are available. The chain is Bucandin from Bungarus candidus (Malayan krait).